The following is an 84-amino-acid chain: Small ribosomal subunit protein bS18A (84 aa).

This sequence belongs to the bacterial ribosomal protein bS18 family. In terms of assembly, part of the 30S ribosomal subunit. Forms a tight heterodimer with protein bS6.

Its function is as follows. Binds as a heterodimer with protein bS6 to the central domain of the 16S rRNA, where it helps stabilize the platform of the 30S subunit. The protein is Small ribosomal subunit protein bS18A (rpsR1) of Mycobacterium bovis (strain ATCC BAA-935 / AF2122/97).